Consider the following 275-residue polypeptide: Elongation factor Ts (275 aa).

The involved in Mg(2+) ion dislocation from EF-Tu stretch occupies residues 76–79; it reads TDFV.

It belongs to the EF-Ts family.

It localises to the cytoplasm. Functionally, associates with the EF-Tu.GDP complex and induces the exchange of GDP to GTP. It remains bound to the aminoacyl-tRNA.EF-Tu.GTP complex up to the GTP hydrolysis stage on the ribosome. In Rhodococcus jostii (strain RHA1), this protein is Elongation factor Ts.